The following is a 95-amino-acid chain: Putative regulatory protein Pmob_0099 (95 aa).

Belongs to the RemA family.

This is Putative regulatory protein Pmob_0099 from Petrotoga mobilis (strain DSM 10674 / SJ95).